Consider the following 662-residue polypeptide: MMEPCEYREYREYYRARGKEMVDYISQYLSTVRERQVTPNVQPGYLRAQLPASAPEEPDSWDSIFGDIERVIMPGVVHWQSPHMHAYYPALTSWPSLLGDMLADAINCLGFTWASSPACTELEMNIMDWLAKMLGLPEYFLHHHPSSRGGGVLQSTVSESTLIALLAARKNKILAMKACEPDANESSLNARLVAYTSDQAHSSVEKAGLISLVKIRFLPVDDNFSLRGEALQKAIEEDKQQGLVPVFVCATLGTTGVCAFDRLSELGPICASEGLWLHVDAAYAGTAFLCPELRGFLEGIEYADSFTFNPSKWMMVHFDCTGFWVKDKYKLQQTFSVNPIYLRHANSGAATDFMHWQIPLSRRFRSIKLWFVIRSFGVKNLQAHVRHGTEMAKYFESLVRSDPSFEIPAKRHLGLVVFRLKGPNCLTESVLKEIAKAGQLFLIPATIQDKLIIRFTVTSQFTTKEDILRDWHLIQEAANLVLSQHCTSQPSPRAKNVIPPPPGTRGLSLESVSEGGDDPAQARKIIKQPGASLARREGGSDLETMPDPFDDCFSEEAPNTTKHKLSSFLFSYLSVQNRRKTTRSLSCNSVPMSAQKSLPADASLKNGGSFRARIFSGFPEQMMMMKKGAFKKLIKFYSVPSFPECSSQCARQLPCCPLEAMV.

Tyrosine 88 and histidine 201 together coordinate substrate. Lysine 312 bears the N6-(pyridoxal phosphate)lysine mark. The tract at residues 489–518 is disordered; that stretch reads QPSPRAKNVIPPPPGTRGLSLESVSEGGDD.

This sequence belongs to the group II decarboxylase family. Homodimer. Pyridoxal 5'-phosphate serves as cofactor.

The catalysed reaction is L-histidine + H(+) = histamine + CO2. It functions in the pathway amine and polyamine biosynthesis; histamine biosynthesis; histamine from L-histidine: step 1/1. Catalyzes the biosynthesis of histamine from histidine. This chain is Histidine decarboxylase (Hdc), found in Mus musculus (Mouse).